The following is a 274-amino-acid chain: Undecaprenyl-diphosphatase (274 aa).

The next 7 helical transmembrane spans lie at 4-24 (ILLLKALILGIVEGLTEFLPI), 46-63 (LFEIVIQSGAILAVVWEY), 82-102 (KFILNLFVAFLPLAILGLAFG), 109-129 (LFNPVTVASTFILGAFVILWA), 184-204 (ATEFSFFLAIPTLIVATFYQL), 218-238 (MWAVGFVAAFVSAFLCVRWLL), and 249-269 (FAWYRIAFGIVVLATWQFGWV).

Belongs to the UppP family.

The protein localises to the cell inner membrane. It carries out the reaction di-trans,octa-cis-undecaprenyl diphosphate + H2O = di-trans,octa-cis-undecaprenyl phosphate + phosphate + H(+). In terms of biological role, catalyzes the dephosphorylation of undecaprenyl diphosphate (UPP). Confers resistance to bacitracin. This chain is Undecaprenyl-diphosphatase, found in Dechloromonas aromatica (strain RCB).